The chain runs to 481 residues: Phosphoglucosamine mutase (481 aa).

The active-site Phosphoserine intermediate is Ser-129. Mg(2+) contacts are provided by Ser-129, Asp-271, Asp-273, and Asp-275. Ser-129 carries the post-translational modification Phosphoserine.

Belongs to the phosphohexose mutase family. The cofactor is Mg(2+). Post-translationally, activated by phosphorylation.

It carries out the reaction alpha-D-glucosamine 1-phosphate = D-glucosamine 6-phosphate. Functionally, catalyzes the conversion of glucosamine-6-phosphate to glucosamine-1-phosphate. This chain is Phosphoglucosamine mutase, found in Picosynechococcus sp. (strain ATCC 27264 / PCC 7002 / PR-6) (Agmenellum quadruplicatum).